The chain runs to 532 residues: Glucose-6-phosphate isomerase (532 aa).

E322 serves as the catalytic Proton donor. Catalysis depends on residues H351 and K457.

The protein belongs to the GPI family.

The protein resides in the cytoplasm. It catalyses the reaction alpha-D-glucose 6-phosphate = beta-D-fructose 6-phosphate. Its pathway is carbohydrate biosynthesis; gluconeogenesis. It participates in carbohydrate degradation; glycolysis; D-glyceraldehyde 3-phosphate and glycerone phosphate from D-glucose: step 2/4. Catalyzes the reversible isomerization of glucose-6-phosphate to fructose-6-phosphate. The chain is Glucose-6-phosphate isomerase from Synechococcus sp. (strain JA-2-3B'a(2-13)) (Cyanobacteria bacterium Yellowstone B-Prime).